Here is a 965-residue protein sequence, read N- to C-terminus: UvrABC system protein A (965 aa).

Gly-32–Ser-39 lines the ATP pocket. The C4-type zinc-finger motif lies at Cys-254 to Cys-281. ABC transporter domains are found at residues Trp-311–Leu-588 and Pro-608–Ala-937. Position 641 to 648 (Gly-641 to Ser-648) interacts with ATP. A C4-type zinc finger spans residues Cys-740 to Cys-766.

It belongs to the ABC transporter superfamily. UvrA family. As to quaternary structure, forms a heterotetramer with UvrB during the search for lesions.

Its subcellular location is the cytoplasm. The UvrABC repair system catalyzes the recognition and processing of DNA lesions. UvrA is an ATPase and a DNA-binding protein. A damage recognition complex composed of 2 UvrA and 2 UvrB subunits scans DNA for abnormalities. When the presence of a lesion has been verified by UvrB, the UvrA molecules dissociate. The sequence is that of UvrABC system protein A from Xylella fastidiosa (strain Temecula1 / ATCC 700964).